The following is a 476-amino-acid chain: Sulfate adenylyltransferase subunit 1 (476 aa).

A tr-type G domain is found at 24–239 (KSLLRFLTCG…LLETVDVDHE (216 aa)). Positions 33–40 (GSVDDGKS) are G1. Residue 33–40 (GSVDDGKS) participates in GTP binding. A G2 region spans residues 91–95 (GITID). Residues 112–115 (DTPG) form a G3 region. GTP contacts are provided by residues 112-116 (DTPGH) and 167-170 (NKMD). Positions 167–170 (NKMD) are G4. The segment at 205–207 (SAL) is G5.

This sequence belongs to the TRAFAC class translation factor GTPase superfamily. Classic translation factor GTPase family. CysN/NodQ subfamily. Heterodimer composed of CysD, the smaller subunit, and CysN.

It catalyses the reaction sulfate + ATP + H(+) = adenosine 5'-phosphosulfate + diphosphate. It participates in sulfur metabolism; hydrogen sulfide biosynthesis; sulfite from sulfate: step 1/3. Its function is as follows. With CysD forms the ATP sulfurylase (ATPS) that catalyzes the adenylation of sulfate producing adenosine 5'-phosphosulfate (APS) and diphosphate, the first enzymatic step in sulfur assimilation pathway. APS synthesis involves the formation of a high-energy phosphoric-sulfuric acid anhydride bond driven by GTP hydrolysis by CysN coupled to ATP hydrolysis by CysD. This Vibrio campbellii (strain ATCC BAA-1116) protein is Sulfate adenylyltransferase subunit 1.